A 567-amino-acid chain; its full sequence is Membrane protein insertase YidC (567 aa).

Residues 3–23 (IQRIVLFAGLAIVSYLMVLAW) form a helical membrane-spanning segment. A disordered region spans residues 32–80 (TEQVAEAQSSSDSSATNSTDDMILPEDNNAGGEEFATPETGSLASTSAN). Over residues 40–52 (SSSDSSATNSTDD) the composition is skewed to low complexity. Polar residues predominate over residues 70–80 (ETGSLASTSAN). The next 5 membrane-spanning stretches (helical) occupy residues 354-374 (FGWL…FYGL), 378-398 (WGVA…HLSA), 445-465 (GGCL…WVLF), 485-505 (MDPY…QMSL), and 522-542 (PLIF…YWLV).

This sequence belongs to the OXA1/ALB3/YidC family. Type 1 subfamily. As to quaternary structure, interacts with the Sec translocase complex via SecD. Specifically interacts with transmembrane segments of nascent integral membrane proteins during membrane integration.

It is found in the cell inner membrane. In terms of biological role, required for the insertion and/or proper folding and/or complex formation of integral membrane proteins into the membrane. Involved in integration of membrane proteins that insert both dependently and independently of the Sec translocase complex, as well as at least some lipoproteins. Aids folding of multispanning membrane proteins. In Marinobacter nauticus (strain ATCC 700491 / DSM 11845 / VT8) (Marinobacter aquaeolei), this protein is Membrane protein insertase YidC.